Here is a 383-residue protein sequence, read N- to C-terminus: UDP-N-acetylglucosamine--N-acetylmuramyl-(pentapeptide) pyrophosphoryl-undecaprenol N-acetylglucosamine transferase (383 aa).

UDP-N-acetyl-alpha-D-glucosamine contacts are provided by residues 11–13 (TGG), Asn-125, Arg-166, Ser-191, Ile-246, and Gln-291. A disordered region spans residues 364–383 (PNGRERTPIEAEKKAPRSNS). The span at 366 to 383 (GRERTPIEAEKKAPRSNS) shows a compositional bias: basic and acidic residues.

Belongs to the glycosyltransferase 28 family. MurG subfamily.

It is found in the cell inner membrane. The enzyme catalyses di-trans,octa-cis-undecaprenyl diphospho-N-acetyl-alpha-D-muramoyl-L-alanyl-D-glutamyl-meso-2,6-diaminopimeloyl-D-alanyl-D-alanine + UDP-N-acetyl-alpha-D-glucosamine = di-trans,octa-cis-undecaprenyl diphospho-[N-acetyl-alpha-D-glucosaminyl-(1-&gt;4)]-N-acetyl-alpha-D-muramoyl-L-alanyl-D-glutamyl-meso-2,6-diaminopimeloyl-D-alanyl-D-alanine + UDP + H(+). It participates in cell wall biogenesis; peptidoglycan biosynthesis. In terms of biological role, cell wall formation. Catalyzes the transfer of a GlcNAc subunit on undecaprenyl-pyrophosphoryl-MurNAc-pentapeptide (lipid intermediate I) to form undecaprenyl-pyrophosphoryl-MurNAc-(pentapeptide)GlcNAc (lipid intermediate II). This Myxococcus xanthus (strain DK1622) protein is UDP-N-acetylglucosamine--N-acetylmuramyl-(pentapeptide) pyrophosphoryl-undecaprenol N-acetylglucosamine transferase.